We begin with the raw amino-acid sequence, 160 residues long: MKRIDIDDDLYTYIASHTRQIGESASDILRRLLDVNSSEPEADSKSEPTESVFNRLNEQDVRIQKSVVARFLYILSMLYRCHPSEFSQVLDIRGRDRQYFARSEEALLTSGNSTNPKQIPDSPFWVITNTNTTKKKAMLTQVAEKLGYQSADAEKIRDFL.

It belongs to the SeqA family. As to quaternary structure, homodimer. Polymerizes to form helical filaments.

The protein resides in the cytoplasm. Its function is as follows. Negative regulator of replication initiation, which contributes to regulation of DNA replication and ensures that replication initiation occurs exactly once per chromosome per cell cycle. Binds to pairs of hemimethylated GATC sequences in the oriC region, thus preventing assembly of replication proteins and re-initiation at newly replicated origins. Repression is relieved when the region becomes fully methylated. This chain is Negative modulator of initiation of replication, found in Idiomarina loihiensis (strain ATCC BAA-735 / DSM 15497 / L2-TR).